Reading from the N-terminus, the 1754-residue chain is Probable outer membrane protein PmpB (1754 aa).

The N-terminal stretch at 1-14 (MSSMKWLSATAVFA) is a signal peptide. 2 stretches are compositionally biased toward low complexity: residues 68-105 (NIPTTDTTTPTNSNSSSSNGETASVSEDSDSTTTTPDP) and 212-232 (SETSGSSSSSGNDSVSSPSSS). Disordered regions lie at residues 68-109 (NIPT…KGGG), 190-235 (SSNS…SRAE), 252-271 (PAAQTDTETSTPSHKPGSGG), 397-438 (NADA…ATAK), 621-668 (AAEN…STPS), and 1299-1332 (TSSASGGSGVSSSIPTNPKRISAAAPSGSAATTP). Composition is skewed to polar residues over residues 252–264 (PAAQTDTETSTPS) and 402–412 (ASSSPQSGSGA). Composition is skewed to low complexity over residues 413–427 (TTVSNSGDSSSGSDS), 636–668 (PTADTAEQPAAASAATSTPESAPVVSTALSTPS), 1299–1311 (TSSASGGSGVSSS), and 1320–1332 (SAAAPSGSAATTP). Residues 1461-1754 (DDIAYNNFWV…MTSCGARMIF (294 aa)) form the Autotransporter domain.

Belongs to the PMP outer membrane protein family.

It is found in the secreted. The protein resides in the cell wall. The protein localises to the cell outer membrane. The sequence is that of Probable outer membrane protein PmpB (pmpB) from Chlamydia trachomatis serovar D (strain ATCC VR-885 / DSM 19411 / UW-3/Cx).